The sequence spans 859 residues: Probable helicase A859L (859 aa).

The Helicase ATP-binding domain maps to Y178–A349. An ATP-binding site is contributed by M191–T198. The DEAH box signature appears at D298–H301. Residues H401 to S553 enclose the Helicase C-terminal domain.

It belongs to the asfivirus helicase A859L family.

This African swine fever virus (isolate Tick/South Africa/Pretoriuskop Pr4/1996) (ASFV) protein is Probable helicase A859L.